The chain runs to 894 residues: Translation factor GUF1 homolog, mitochondrial (894 aa).

Residues 157–189 form a disordered region; it reads EDEGLDGGPPPGMEAKKSSSSSSSNNVHSNCSD. Positions 174 to 188 are enriched in low complexity; sequence SSSSSSSNNVHSNCS. The tr-type G domain occupies 199 to 376; it reads ENIRNFCILA…RIVSEIPSPA (178 aa). GTP is bound by residues 208–215, 269–273, and 323–326; these read AHIDSGKS, DTPGH, and NKID. The segment at 649–674 is disordered; the sequence is DHDDCNDNGGSNSDDRSDRSGKNPPD.

The protein belongs to the TRAFAC class translation factor GTPase superfamily. Classic translation factor GTPase family. LepA subfamily.

It localises to the mitochondrion inner membrane. It catalyses the reaction GTP + H2O = GDP + phosphate + H(+). Functionally, promotes mitochondrial protein synthesis. May act as a fidelity factor of the translation reaction, by catalyzing a one-codon backward translocation of tRNAs on improperly translocated ribosomes. Binds to mitochondrial ribosomes in a GTP-dependent manner. This is Translation factor GUF1 homolog, mitochondrial from Plasmodium knowlesi (strain H).